Reading from the N-terminus, the 293-residue chain is Extracellular metalloprotease PODANS_2_14170 (293 aa).

The signal sequence occupies residues Met-1–Ala-18. The N-linked (GlcNAc...) asparagine glycan is linked to Asn-60. His-206 contacts Zn(2+). The active site involves Glu-207. His-210 contributes to the Zn(2+) binding site. Residues Cys-242 and Cys-269 are joined by a disulfide bond.

The protein belongs to the peptidase M43B family.

Its subcellular location is the secreted. Secreted metalloproteinase that allows assimilation of proteinaceous substrates. This chain is Extracellular metalloprotease PODANS_2_14170, found in Podospora anserina (strain S / ATCC MYA-4624 / DSM 980 / FGSC 10383) (Pleurage anserina).